We begin with the raw amino-acid sequence, 261 residues long: Ribonuclease PH (261 aa).

Phosphate contacts are provided by residues arginine 88 and 126–128 (GTR). A disordered region spans residues 242-261 (PYPGVLPEPKNPEPKKKFGA). Residues 251 to 261 (KNPEPKKKFGA) show a composition bias toward basic and acidic residues.

This sequence belongs to the RNase PH family. Homohexameric ring arranged as a trimer of dimers.

The enzyme catalyses tRNA(n+1) + phosphate = tRNA(n) + a ribonucleoside 5'-diphosphate. Phosphorolytic 3'-5' exoribonuclease that plays an important role in tRNA 3'-end maturation. Removes nucleotide residues following the 3'-CCA terminus of tRNAs; can also add nucleotides to the ends of RNA molecules by using nucleoside diphosphates as substrates, but this may not be physiologically important. Probably plays a role in initiation of 16S rRNA degradation (leading to ribosome degradation) during starvation. This chain is Ribonuclease PH, found in Rhodococcus erythropolis (strain PR4 / NBRC 100887).